The primary structure comprises 629 residues: Phosphomethylpyrimidine synthase (629 aa).

Residues 1-21 (MSIKAKNAAHLRESAQVDSGS) are disordered. Residues Asn233, Met262, Tyr291, His327, 347–349 (SRG), 388–391 (DGLR), and Glu427 contribute to the substrate site. Residue His431 participates in Zn(2+) binding. Tyr454 is a substrate binding site. His495 is a binding site for Zn(2+). [4Fe-4S] cluster contacts are provided by Cys575, Cys578, and Cys583.

The protein belongs to the ThiC family. As to quaternary structure, homodimer. Requires [4Fe-4S] cluster as cofactor.

It carries out the reaction 5-amino-1-(5-phospho-beta-D-ribosyl)imidazole + S-adenosyl-L-methionine = 4-amino-2-methyl-5-(phosphooxymethyl)pyrimidine + CO + 5'-deoxyadenosine + formate + L-methionine + 3 H(+). The protein operates within cofactor biosynthesis; thiamine diphosphate biosynthesis. In terms of biological role, catalyzes the synthesis of the hydroxymethylpyrimidine phosphate (HMP-P) moiety of thiamine from aminoimidazole ribotide (AIR) in a radical S-adenosyl-L-methionine (SAM)-dependent reaction. This Pseudomonas syringae pv. syringae (strain B728a) protein is Phosphomethylpyrimidine synthase.